We begin with the raw amino-acid sequence, 247 residues long: Ubiquinone biosynthesis O-methyltransferase (247 aa).

Arginine 40, glycine 71, aspartate 92, and methionine 135 together coordinate S-adenosyl-L-methionine.

Belongs to the methyltransferase superfamily. UbiG/COQ3 family.

The enzyme catalyses a 3-demethylubiquinol + S-adenosyl-L-methionine = a ubiquinol + S-adenosyl-L-homocysteine + H(+). It carries out the reaction a 3-(all-trans-polyprenyl)benzene-1,2-diol + S-adenosyl-L-methionine = a 2-methoxy-6-(all-trans-polyprenyl)phenol + S-adenosyl-L-homocysteine + H(+). It functions in the pathway cofactor biosynthesis; ubiquinone biosynthesis. In terms of biological role, O-methyltransferase that catalyzes the 2 O-methylation steps in the ubiquinone biosynthetic pathway. This is Ubiquinone biosynthesis O-methyltransferase from Ruegeria sp. (strain TM1040) (Silicibacter sp.).